Reading from the N-terminus, the 165-residue chain is Lipoprotein signal peptidase (165 aa).

The next 3 helical transmembrane spans lie at 9 to 29 (LLTI…VLLY), 69 to 89 (KYFL…FLFL), and 100 to 120 (FSLI…FFYN). Residues D124 and D142 contribute to the active site. A helical membrane pass occupies residues 133–153 (WSFPTFNFADIFISLGTLIFV).

This sequence belongs to the peptidase A8 family.

It localises to the cell inner membrane. It carries out the reaction Release of signal peptides from bacterial membrane prolipoproteins. Hydrolyzes -Xaa-Yaa-Zaa-|-(S,diacylglyceryl)Cys-, in which Xaa is hydrophobic (preferably Leu), and Yaa (Ala or Ser) and Zaa (Gly or Ala) have small, neutral side chains.. Its pathway is protein modification; lipoprotein biosynthesis (signal peptide cleavage). This protein specifically catalyzes the removal of signal peptides from prolipoproteins. This Chlamydia felis (strain Fe/C-56) (Chlamydophila felis) protein is Lipoprotein signal peptidase.